Consider the following 622-residue polypeptide: Probable potassium transport system protein Kup 1 (622 aa).

A run of 12 helical transmembrane segments spans residues leucine 11–valine 31, isoleucine 50–valine 70, valine 101–proline 121, proline 137–valine 157, phenylalanine 168–isoleucine 188, phenylalanine 215–leucine 235, tryptophan 247–leucine 267, alanine 285–isoleucine 305, isoleucine 337–phenylalanine 357, alanine 366–isoleucine 386, proline 393–alanine 413, and leucine 419–threonine 439.

It belongs to the HAK/KUP transporter (TC 2.A.72) family.

Its subcellular location is the cell inner membrane. It carries out the reaction K(+)(in) + H(+)(in) = K(+)(out) + H(+)(out). Functionally, transport of potassium into the cell. Likely operates as a K(+):H(+) symporter. This is Probable potassium transport system protein Kup 1 from Albidiferax ferrireducens (strain ATCC BAA-621 / DSM 15236 / T118) (Rhodoferax ferrireducens).